A 168-amino-acid polypeptide reads, in one-letter code: MTALDIQISVEAGDWPPEDELQSFSEVVLEAAADFLAREERQPLSAEAAELSLVFTDDQSIKAINAEWRGQDKPTNVLSFPAFPVTPGKMPGLMLGDIVVAHETLRREAAELEKPFDAHLTHLLVHGFLHLFGYDHIEDDEAERMERLETRILARLGLSDPYGDLPPV.

The Zn(2+) site is built by His126, His130, and His136.

This sequence belongs to the endoribonuclease YbeY family. Zn(2+) is required as a cofactor.

It localises to the cytoplasm. In terms of biological role, single strand-specific metallo-endoribonuclease involved in late-stage 70S ribosome quality control and in maturation of the 3' terminus of the 16S rRNA. The polypeptide is Endoribonuclease YbeY (Sinorhizobium medicae (strain WSM419) (Ensifer medicae)).